Reading from the N-terminus, the 348-residue chain is RNA 3'-terminal phosphate cyclase (348 aa).

Residues Gln107 and His290–Gln294 each bind ATP. Catalysis depends on His316, which acts as the Tele-AMP-histidine intermediate.

Belongs to the RNA 3'-terminal cyclase family. Type 1 subfamily.

The protein resides in the cytoplasm. The catalysed reaction is a 3'-end 3'-phospho-ribonucleotide-RNA + ATP = a 3'-end 2',3'-cyclophospho-ribonucleotide-RNA + AMP + diphosphate. In terms of biological role, catalyzes the conversion of 3'-phosphate to a 2',3'-cyclic phosphodiester at the end of RNA. The mechanism of action of the enzyme occurs in 3 steps: (A) adenylation of the enzyme by ATP; (B) transfer of adenylate to an RNA-N3'P to produce RNA-N3'PP5'A; (C) and attack of the adjacent 2'-hydroxyl on the 3'-phosphorus in the diester linkage to produce the cyclic end product. The biological role of this enzyme is unknown but it is likely to function in some aspects of cellular RNA processing. The sequence is that of RNA 3'-terminal phosphate cyclase (rtcA) from Nostoc sp. (strain PCC 7120 / SAG 25.82 / UTEX 2576).